The sequence spans 390 residues: MSIRRVMHVDLDAFFVSVEQAVRPELKDKPVIVGGKPERRGVVAAASYEARKFGIHSGMPLITAKNLCPQAIFIEGNHQLYREYSEKFMLILSDFSPFLEPMGLDEAYLEVTGFESLHGSIAEMASKIRRRITAEMGINASIGIANSKVAAKIATERAKPNGQCEVPAGEEASFLAPLDIAVMPGIGKKTEQHLKSLGIDTLGKLAALPASFLKSRLGAYAPYLSNAAMGIDNRPVEMPSEAKSISRETTFETDTRNQTFLEAKLSYLSEKITATLRKRGKQARVVQIKIRFADFTTLTRQKHLGQPASGNREIFQTALSLMNGILDSDRQTVRLLGVGISDFCGPEKQLEIDPAKARLEKLDASLDKIRQKYGFSSVQTGRTYRLKDMF.

The UmuC domain occupies 6–187; the sequence is VMHVDLDAFF…LDIAVMPGIG (182 aa). 2 residues coordinate Mg(2+): aspartate 10 and aspartate 105. Glutamate 106 is an active-site residue.

Belongs to the DNA polymerase type-Y family. Monomer. It depends on Mg(2+) as a cofactor.

The protein localises to the cytoplasm. It carries out the reaction DNA(n) + a 2'-deoxyribonucleoside 5'-triphosphate = DNA(n+1) + diphosphate. Functionally, poorly processive, error-prone DNA polymerase involved in untargeted mutagenesis. Copies undamaged DNA at stalled replication forks, which arise in vivo from mismatched or misaligned primer ends. These misaligned primers can be extended by PolIV. Exhibits no 3'-5' exonuclease (proofreading) activity. May be involved in translesional synthesis, in conjunction with the beta clamp from PolIII. The polypeptide is DNA polymerase IV (Dehalococcoides mccartyi (strain CBDB1)).